An 821-amino-acid chain; its full sequence is Spindle apparatus protein lin-5 (821 aa).

The tract at residues 161-199 (EASSGFRTPKRNNYSLTSLQTPTATARRLRTASSTARRS) is disordered. Positions 162–180 (ASSGFRTPKRNNYSLTSLQ) are enriched in polar residues. Positions 181 to 199 (TPTATARRLRTASSTARRS) are enriched in low complexity. The stretch at 211 to 634 (KFMRSERELK…REKESAEIKK (424 aa)) forms a coiled coil. Disordered stretches follow at residues 736-758 (RSES…FTPS) and 779-821 (LKCS…SKKQ).

Interacts with gpr-1; gpr-1 forms a complex with gpr-2 and GDP-bound goa-1.

It localises to the cytoplasm. The protein resides in the cell cortex. It is found in the cytoskeleton. The protein localises to the spindle. Its subcellular location is the chromosome. It localises to the centromere. The protein resides in the kinetochore. It is found in the microtubule organizing center. The protein localises to the centrosome. Functionally, essential component of the spindle apparatus required for spindle positioning and chromosome movement. Acts to recruit or anchor gpr-1/gpr-2 complex to the spindle and cortex. Also involved, directly or indirectly, in cytokinesis and in the coupling of DNA replication, centrosome duplication and mitotic division. In Caenorhabditis elegans, this protein is Spindle apparatus protein lin-5 (lin-5).